Consider the following 38-residue polypeptide: Photosystem II reaction center protein L (38 aa).

Residues 17–37 (SLYWGLLLIFVLAVLFSSYIF) traverse the membrane as a helical segment.

Belongs to the PsbL family. In terms of assembly, PSII is composed of 1 copy each of membrane proteins PsbA, PsbB, PsbC, PsbD, PsbE, PsbF, PsbH, PsbI, PsbJ, PsbK, PsbL, PsbM, PsbT, PsbX, PsbY, PsbZ, Psb30/Ycf12, at least 3 peripheral proteins of the oxygen-evolving complex and a large number of cofactors. It forms dimeric complexes.

It is found in the plastid. Its subcellular location is the chloroplast thylakoid membrane. One of the components of the core complex of photosystem II (PSII). PSII is a light-driven water:plastoquinone oxidoreductase that uses light energy to abstract electrons from H(2)O, generating O(2) and a proton gradient subsequently used for ATP formation. It consists of a core antenna complex that captures photons, and an electron transfer chain that converts photonic excitation into a charge separation. This subunit is found at the monomer-monomer interface and is required for correct PSII assembly and/or dimerization. This chain is Photosystem II reaction center protein L, found in Tupiella akineta (Green alga).